Consider the following 412-residue polypeptide: Imidazolonepropionase (412 aa).

Positions 76 and 78 each coordinate Fe(3+). Residues His-76 and His-78 each coordinate Zn(2+). 4-imidazolone-5-propanoate is bound by residues Arg-85, Tyr-148, and His-181. Tyr-148 provides a ligand contact to N-formimidoyl-L-glutamate. His-242 is a Fe(3+) binding site. A Zn(2+)-binding site is contributed by His-242. Glu-245 provides a ligand contact to 4-imidazolone-5-propanoate. Position 317 (Asp-317) interacts with Fe(3+). Residue Asp-317 coordinates Zn(2+). Asn-319 and Gly-321 together coordinate N-formimidoyl-L-glutamate. Ser-322 serves as a coordination point for 4-imidazolone-5-propanoate.

Belongs to the metallo-dependent hydrolases superfamily. HutI family. The cofactor is Zn(2+). It depends on Fe(3+) as a cofactor.

It is found in the cytoplasm. The enzyme catalyses 4-imidazolone-5-propanoate + H2O = N-formimidoyl-L-glutamate. The protein operates within amino-acid degradation; L-histidine degradation into L-glutamate; N-formimidoyl-L-glutamate from L-histidine: step 3/3. Catalyzes the hydrolytic cleavage of the carbon-nitrogen bond in imidazolone-5-propanoate to yield N-formimidoyl-L-glutamate. It is the third step in the universal histidine degradation pathway. This Staphylococcus aureus (strain MRSA252) protein is Imidazolonepropionase.